The primary structure comprises 83 residues: MASKKIDRLSFDATLEELETIVHQLEQGSLPLEEALKQFEQGVHLVRAGQQKLEQAEQKIQILLTQADGTEQAVPFQPEQGEE.

It belongs to the XseB family. As to quaternary structure, heterooligomer composed of large and small subunits.

Its subcellular location is the cytoplasm. The enzyme catalyses Exonucleolytic cleavage in either 5'- to 3'- or 3'- to 5'-direction to yield nucleoside 5'-phosphates.. Functionally, bidirectionally degrades single-stranded DNA into large acid-insoluble oligonucleotides, which are then degraded further into small acid-soluble oligonucleotides. The protein is Exodeoxyribonuclease 7 small subunit of Aeromonas salmonicida (strain A449).